The sequence spans 179 residues: Methylated-DNA--protein-cysteine methyltransferase, inducible (179 aa).

The active-site Nucleophile; methyl group acceptor is C141.

It belongs to the MGMT family.

It carries out the reaction a 6-O-methyl-2'-deoxyguanosine in DNA + L-cysteinyl-[protein] = S-methyl-L-cysteinyl-[protein] + a 2'-deoxyguanosine in DNA. The catalysed reaction is a 4-O-methyl-thymidine in DNA + L-cysteinyl-[protein] = a thymidine in DNA + S-methyl-L-cysteinyl-[protein]. Functionally, involved in the cellular defense against the biological effects of O6-methylguanine (O6-MeG) and O4-methylthymine (O4-MeT) in DNA. Repairs the methylated nucleobase in DNA by stoichiometrically transferring the methyl group to a cysteine residue in the enzyme. This is a suicide reaction: the enzyme is irreversibly inactivated. The polypeptide is Methylated-DNA--protein-cysteine methyltransferase, inducible (adaB) (Bacillus subtilis (strain 168)).